A 7031-amino-acid chain; its full sequence is Extracellular matrix-binding protein EbhB (7031 aa).

The signal sequence occupies residues 1 to 39; it reads MNYRDKIQKFSIRKYTVGTFSTVIATLVFLGFNTSQAHA. Polar residues predominate over residues 41–59; that stretch reads ETNQPASVVKQKQQSNNEQ. Disordered regions lie at residues 41–86, 99–152, 250–277, 1342–1373, and 2418–2438; these read ETNQ…HENE, KVAQ…GNDN, PQRQ…PRSV, NNIT…ATTD, and TITP…TLTA. The segment covering 65–80 has biased composition (low complexity); that stretch reads SQVQNSQNSQNGQSLS. Residues 99–117 show a composition bias toward polar residues; it reads KVAQSSTTNDEQPASQNVN. Over residues 130–140 the composition is skewed to basic and acidic residues; it reads PDKEQSKHKQN. Polar residues-rich tracts occupy residues 141–151, 250–266, 1360–1373, and 2427–2438; these read ESQSANKNGND, PQRQ…QTRS, FRTT…ATTD, and HSVSSNPSTLTA. FIVAR domains are found at residues 2524 to 2580, 2610 to 2666, 2687 to 2750, 2780 to 2836, 2864 to 2919, 2947 to 3002, 3030 to 3085, 3154 to 3212, 3280 to 3339, 3407 to 3465, 3533 to 3591, 3659 to 3717, 3785 to 3843, 3911 to 3969, 4037 to 4095, 4163 to 4221, 4289 to 4347, 4415 to 4473, 4541 to 4599, 4667 to 4725, 4793 to 4851, 4919 to 4977, 5045 to 5103, 5171 to 5229, 5297 to 5355, 5423 to 5481, 5549 to 5607, 5675 to 5733, 5801 to 5859, 5927 to 5985, 6053 to 6111, 6179 to 6236, 6304 to 6362, 6430 to 6488, 6556 to 6614, 6682 to 6740, 6818 to 6866, and 6934 to 6992; these read AKNH…VSDA, SKNN…ISDE, DTHA…VQSA, AKTK…IAAE, AKTQ…IRQN, AKNQ…INTN, AKTQ…INDK, AMTK…VNQK, AMTG…VNNA, AMGN…VNRA, AMGN…VTEA, AMNT…ITQK, AMAS…VEAA, AMGN…VEQA, AMGT…VTAA, AMKG…ITQA, QMGN…VEAA, AMAN…VENA, AMGT…INQI, AMGQ…VDRA, AMNS…VDNA, AMGA…INGM, AMTA…VNSA, AMKG…ITQV, AMHS…VEQA, AMGQ…VERA, AMTA…VTNA, AMKG…INQA, AMTN…VETA, AMSN…VEQA, AMNQ…INQK, AMGN…VQAA, AMGQ…VEAA, AMQR…VEQA, AMDQ…VTAA, AMNQ…VTQA, DKDQ…VEAA, and AMGN…VEAA.

This is Extracellular matrix-binding protein EbhB (ebhB) from Staphylococcus aureus (strain Newman).